The following is a 280-amino-acid chain: Succinate dehydrogenase [ubiquinone] iron-sulfur subunit, mitochondrial (280 aa).

Residues 1–28 (MAAVVALSLRRRFPAAALGGARLQACRG) constitute a mitochondrion transit peptide. Residues 40 to 133 (KKFAIYRWDP…VSKIYPLPHM (94 aa)) form the 2Fe-2S ferredoxin-type domain. K51 and K55 each carry N6-acetyllysine. [2Fe-2S] cluster-binding residues include C93, C98, C101, and C113. The interaction with SDHAF1 stretch occupies residues 146 to 218 (FYAQYKSIEP…PAVLMQAYRW (73 aa)). A 4Fe-4S ferredoxin-type domain is found at 176-206 (DREKLDGLYECILCACCSTSCPSYWWNGDKY). Positions 186, 189, and 192 each coordinate [4Fe-4S] cluster. A [3Fe-4S] cluster-binding site is contributed by C196. W201 contributes to the a ubiquinone binding site. 2 residues coordinate [3Fe-4S] cluster: C243 and C249. C253 contacts [4Fe-4S] cluster.

This sequence belongs to the succinate dehydrogenase/fumarate reductase iron-sulfur protein family. In terms of assembly, component of complex II composed of four subunits: the flavoprotein (FP) SDHA, iron-sulfur protein (IP) SDHB, and a cytochrome b560 composed of SDHC and SDHD. Interacts with SDHAF1; the interaction is required for iron-sulfur cluster incorporation into SDHB. The cofactor is [2Fe-2S] cluster. [3Fe-4S] cluster serves as cofactor. It depends on [4Fe-4S] cluster as a cofactor.

It is found in the mitochondrion inner membrane. It catalyses the reaction a quinone + succinate = fumarate + a quinol. The catalysed reaction is (R)-malate + a quinone = enol-oxaloacetate + a quinol. It carries out the reaction (S)-malate + a quinone = enol-oxaloacetate + a quinol. The protein operates within carbohydrate metabolism; tricarboxylic acid cycle; fumarate from succinate (eukaryal route): step 1/1. With respect to regulation, enol-oxaloacetate inhibits the succinate dehydrogenase activity. Its function is as follows. Iron-sulfur protein (IP) subunit of the succinate dehydrogenase complex (mitochondrial respiratory chain complex II), responsible for transferring electrons from succinate to ubiquinone (coenzyme Q). SDH also oxidizes malate to the non-canonical enol form of oxaloacetate, enol-oxaloacetate. Enol-oxaloacetate, which is a potent inhibitor of the succinate dehydrogenase activity, is further isomerized into keto-oxaloacetate. The sequence is that of Succinate dehydrogenase [ubiquinone] iron-sulfur subunit, mitochondrial (SDHB) from Bos taurus (Bovine).